A 159-amino-acid chain; its full sequence is Phosphopantetheine adenylyltransferase (159 aa).

His16 lines the ATP pocket. Positions 40, 72, and 86 each coordinate substrate. Residues 87–89 (GLR), Glu97, and 122–128 (YQYLSAS) contribute to the ATP site.

The protein belongs to the bacterial CoaD family. Homohexamer. The cofactor is Mg(2+).

It localises to the cytoplasm. The catalysed reaction is (R)-4'-phosphopantetheine + ATP + H(+) = 3'-dephospho-CoA + diphosphate. It participates in cofactor biosynthesis; coenzyme A biosynthesis; CoA from (R)-pantothenate: step 4/5. Its function is as follows. Reversibly transfers an adenylyl group from ATP to 4'-phosphopantetheine, yielding dephospho-CoA (dPCoA) and pyrophosphate. This is Phosphopantetheine adenylyltransferase from Dehalococcoides mccartyi (strain ATCC BAA-2266 / KCTC 15142 / 195) (Dehalococcoides ethenogenes (strain 195)).